Reading from the N-terminus, the 609-residue chain is Numb-like protein (609 aa).

Disordered stretches follow at residues 1–68, 223–283, 372–421, 434–464, and 537–609; these read MSRS…QWQA, GSFR…PVAA, ASAG…EEVS, QQQQQQQQQQQQQAASVAPVPTMPPALQPFP, and AGAF…EIEL. Over residues 19–29 the composition is skewed to pro residues; sequence PPAPCGAPGPP. A PID domain is found at 74-223; the sequence is RKGTCSFPVR…ASRTSFAREG (150 aa). Phosphoserine occurs at positions 224 and 228. Positions 233–245 are enriched in basic and acidic residues; it reads PAEREAPDKKKAE. The span at 246-259 shows a compositional bias: low complexity; the sequence is AAAAPTVAPGPAQP. At S263 the chain carries Phosphoserine. The residue at position 279 (T279) is a Phosphothreonine. Basic and acidic residues predominate over residues 409 to 418; it reads TPSEAERWLE. S411 bears the Phosphoserine mark. Positions 434–446 are enriched in low complexity; sequence QQQQQQQQQQQQQ. 2 stretches are compositionally biased toward pro residues: residues 454–464 and 558–573; these read PTMPPALQPFP and NGAPWPPEPAPAPAPE.

As to quaternary structure, interacts (via PTB domain) with MAP3K7IP2 (via C-terminal). Interacts (via C-terminal) with TRAF6 (via TRAF domains). Associates with EPS15 and NOTCH1.

The protein localises to the cytoplasm. Functionally, plays a role in the process of neurogenesis. Required throughout embryonic neurogenesis to maintain neural progenitor cells, also called radial glial cells (RGCs), by allowing their daughter cells to choose progenitor over neuronal cell fate. Not required for the proliferation of neural progenitor cells before the onset of embryonic neurogenesis. Also required postnatally in the subventricular zone (SVZ) neurogenesis by regulating SVZ neuroblasts survival and ependymal wall integrity. Negative regulator of NF-kappa-B signaling pathway. The inhibition of NF-kappa-B activation is mediated at least in part, by preventing MAP3K7IP2 to interact with polyubiquitin chains of TRAF6 and RIPK1 and by stimulating the 'Lys-48'-linked polyubiquitination and degradation of TRAF6 in cortical neurons. The polypeptide is Numb-like protein (NUMBL) (Homo sapiens (Human)).